Consider the following 314-residue polypeptide: 3'-5' exoribonuclease YhaM (314 aa).

Residues 163 to 279 (HVVSMLDLAK…LHYIDNLDAK (117 aa)) form the HD domain.

Belongs to the YhaM family.

Its function is as follows. Shows a 3'-5' exoribonuclease activity. The sequence is that of 3'-5' exoribonuclease YhaM from Bacillus cereus (strain G9842).